The following is a 446-amino-acid chain: Zinc finger protein BALDIBIS (446 aa).

The segment at 20–53 (EHIAPNPNPNPNPTSSNSAKRKRNLPGNPDPDAE) is disordered. Ser-58 carries the phosphoserine modification. 2 C2H2-type zinc fingers span residues 68-90 (FICEVCNKGFKRDQNLQLHRRGH) and 110-140 (YICPEKTCVHHDPARALGDLTGIKKHFSRKH). The Nuclear localization signal signature appears at 132–139 (IKKHFSRK). Residues 145 to 168 (WKCDKCSKKYAVMSDWKAHSKICG) form a C2H2-type 2; degenerate zinc finger. Residues Cys-147, Cys-150, His-163, Cys-167, Cys-174, Cys-176, His-189, and Cys-193 each coordinate Zn(2+). The segment at 172 to 195 (YRCDCGTLFSRKDSFITHRAFCDA) adopts a CCHC-type 2; atypical zinc-finger fold. An SHR-binding region spans residues 182–194 (RKDSFITHRAFCD). The disordered stretch occupies residues 425-446 (HNLPDSSPPASTDGTPTADMNQ). Polar residues predominate over residues 427-446 (LPDSSPPASTDGTPTADMNQ).

Binds to RGA and SCL3 competitively in the nucleus. As to expression, expressed in roots, especially in vascular initials, cortex, endodermis, and quiescent center (QC).

It localises to the nucleus. In terms of biological role, transcription factor that, together with JKD, regulates tissue boundaries and asymmetric cell division in roots by a rapid up-regulation of 'SCARECROW' (SCR), thus controlling the nuclear localization of 'SHORT-ROOT' (SHR) and restricting its action. Confines CYCD6 expression to the cortex-endodermis initial/daughter (CEI/CEID) tissues. Binds DNA via its zinc fingers. Recognizes and binds to SCL3 promoter sequence 5'-AGACAA-3' to promote its expression when in complex with RGA. In Arabidopsis thaliana (Mouse-ear cress), this protein is Zinc finger protein BALDIBIS.